The primary structure comprises 334 residues: Leucine-rich repeat-containing protein 26 (334 aa).

The signal sequence occupies residues 1 to 26 (MRGPSWSRPRPLLLLLLLLSPWPVWA). Residues 27-261 (QVSATASPSG…HCAQPLALRD (235 aa)) lie on the Extracellular side of the membrane. The LRRNT domain maps to 34–71 (PSGSLGAPDCPEVCTCVPGGLASCSALSLPAVPPGLSL). Disulfide bonds link Cys-43–Cys-49 and Cys-47–Cys-57. 5 LRR repeats span residues 72 to 93 (RLRA…AFAG), 96 to 117 (ALQR…AFWG), 120 to 141 (ALQL…TFAP), 144 to 167 (ALRN…GALP), and 168 to 190 (LLRS…LGRL). Asn-147 carries N-linked (GlcNAc...) asparagine glycosylation. Residues 201 to 255 (NPWGCGCALRPLCAWLRRHPLPASEAETVLCVWPGRLTLSPLTAFSDAAFSHCAQ) enclose the LRRCT domain. 2 disulfide bridges follow: Cys-205-Cys-231 and Cys-207-Cys-253. A helical transmembrane segment spans residues 262-282 (LAVVYTLGPASFLVSLASCLA). At 283–334 (LGSGLTACRARRRRLRTAALRPPRPPDPNPDPDPHGCASPADPGSPAAAAQA) the chain is on the cytoplasmic side. The segment at 298 to 334 (RTAALRPPRPPDPNPDPDPHGCASPADPGSPAAAAQA) is disordered. Positions 304–313 (PPRPPDPNPD) are enriched in pro residues. The segment covering 320–334 (ASPADPGSPAAAAQA) has biased composition (low complexity).

Interacts with KCNMA1. In terms of tissue distribution, isoform 1 is expressed highly in normal prostate and salivary gland, very weakly in colon, pancreas, and intestine, and not at all in other tissues. Isoform 1 is expressed highly in many cancer cell lines and in breast cancer, pancreatic cancer and colon cancer. Isoform 2 is expressed in cancer cell lines.

It localises to the cell membrane. It is found in the cytoplasm. Its subcellular location is the cytoskeleton. Its function is as follows. Auxiliary protein of the large-conductance, voltage and calcium-activated potassium channel (BK alpha). Required for the conversion of BK alpha channels from a high-voltage to a low-voltage activated channel type in non-excitable cells. These are characterized by negative membrane voltages and constant low levels of calcium. This chain is Leucine-rich repeat-containing protein 26 (LRRC26), found in Homo sapiens (Human).